Consider the following 519-residue polypeptide: Zinc finger protein 692 (519 aa).

The tract at residues 123 to 314 (GPSLSPTPSE…PAWDEDTAQI (192 aa)) is disordered. Positions 145–155 (RSWCSEATSGQ) are enriched in polar residues. At Ser-162 the chain carries Phosphoserine. Residues 164–173 (HDERTQEARL) show a composition bias toward basic and acidic residues. Positions 177 to 187 (VGPPPETFPPP) are enriched in pro residues. The span at 188–206 (GEEEGEEEEDNDEDEEEML) shows a compositional bias: acidic residues. Phosphoserine is present on Ser-231. Residues 247 to 266 (AALSSPLAVPALSASSLSSR) show a composition bias toward low complexity. A compositionally biased stretch (polar residues) spans 277–303 (PQLSRTPQAAQQTEALASTGSQAQSAP). 5 consecutive C2H2-type zinc fingers follow at residues 328 to 353 (MPCD…KYQH), 359 to 383 (FSCP…MKLH), 389 to 411 (YICE…RRIH), 417 to 439 (LQCE…QRKH), and 448 to 471 (FPCE…SKSH). The tract at residues 469–519 (KSHPALLLAPQESPSGPLEPCPSISAPGPLGSSEGSRPSASPQAPTLLPQQ) is disordered. Ser-470 carries the post-translational modification Phosphoserine; by AMPK. Over residues 501–519 (SEGSRPSASPQAPTLLPQQ) the composition is skewed to polar residues.

It belongs to the krueppel C2H2-type zinc-finger protein family. Phosphorylation at Ser-470 results in loss of DNA-binding activity. As to expression, ubiquitous. Highly expressed in brain, thymus and spleen.

It localises to the nucleus. In terms of biological role, may act as an transcriptional repressor for PCK1 gene expression, in turn may participate in the hepatic gluconeogenesis regulation through the activated AMPK signaling pathway. The sequence is that of Zinc finger protein 692 (ZNF692) from Homo sapiens (Human).